A 479-amino-acid chain; its full sequence is Ribulose bisphosphate carboxylase large chain (479 aa).

The propeptide occupies 1 to 2 (MS). Substrate is bound by residues asparagine 123 and threonine 173. Lysine 175 serves as the catalytic Proton acceptor. Lysine 177 serves as a coordination point for substrate. Residues lysine 201, aspartate 203, and glutamate 204 each coordinate Mg(2+). Residue lysine 201 is modified to N6-carboxylysine. The residue at position 208 (serine 208) is a Phosphoserine. Catalysis depends on histidine 294, which acts as the Proton acceptor. 2 residues coordinate substrate: arginine 295 and histidine 327. Threonine 330 bears the Phosphothreonine mark. Serine 379 is a substrate binding site.

Belongs to the RuBisCO large chain family. Type I subfamily. As to quaternary structure, heterohexadecamer of 8 large chains and 8 small chains; disulfide-linked. The disulfide link is formed within the large subunit homodimers. It depends on Mg(2+) as a cofactor. Post-translationally, the disulfide bond which can form in the large chain dimeric partners within the hexadecamer appears to be associated with oxidative stress and protein turnover.

The protein localises to the plastid. Its subcellular location is the chloroplast. It carries out the reaction 2 (2R)-3-phosphoglycerate + 2 H(+) = D-ribulose 1,5-bisphosphate + CO2 + H2O. The catalysed reaction is D-ribulose 1,5-bisphosphate + O2 = 2-phosphoglycolate + (2R)-3-phosphoglycerate + 2 H(+). In terms of biological role, ruBisCO catalyzes two reactions: the carboxylation of D-ribulose 1,5-bisphosphate, the primary event in carbon dioxide fixation, as well as the oxidative fragmentation of the pentose substrate in the photorespiration process. Both reactions occur simultaneously and in competition at the same active site. The polypeptide is Ribulose bisphosphate carboxylase large chain (Nasturtium officinale (Watercress)).